Here is a 399-residue protein sequence, read N- to C-terminus: (R)-2-hydroxy-4-methylpentanoate CoA-transferase (399 aa).

D171 serves as the catalytic Nucleophile.

It belongs to the CoA-transferase III family. In terms of assembly, homodimer.

The enzyme catalyses 4-methylpentanoyl-CoA + (2R)-hydroxy-4-methylpentanoate = (R)-2-hydroxy-4-methylpentanoyl-CoA + 4-methylpentanoate. It participates in amino-acid degradation; L-leucine degradation. Its function is as follows. Involved in the reductive branch of L-leucine fermentation. Catalyzes the transfer of the CoA moiety from 4-methylpentanoyl-CoA (isocaproyl-CoA) to (R)-2-hydroxy-4-methylpentanoate ((R)-2-hydroxyisocaproate), leading to the formation of (R)-2-hydroxy-4-methylpentanoyl-CoA. Other CoA thioesters, such as acetyl-CoA or butyryl-CoA, are not accepted as substrates. This is (R)-2-hydroxy-4-methylpentanoate CoA-transferase from Clostridioides difficile (Peptoclostridium difficile).